Consider the following 479-residue polypeptide: Phosphatidylinositol 4-kinase type 2-beta (479 aa).

Positions 1 to 10 are enriched in acidic residues; sequence MESGSEEPDE. The interval 1–91 is disordered; that stretch reads MESGSEEPDE…PRVGAGHTGH (91 aa). Residues 18–34 show a composition bias toward low complexity; sequence PALHAGPPAGRAAPGGA. The span at 42-62 shows a compositional bias: acidic residues; that stretch reads GLEEEEEGEEDSGPEGDGEEE. A PI3K/PI4K catalytic domain is found at 118–449; that stretch reads GVLPERISQG…VQMPRVIVER (332 aa). Positions 124–130 are G-loop; sequence ISQGSSG. S131 and K146 together coordinate ATP. An important for substrate binding region spans residues 151–153; it reads EPY. An important for interaction with membranes region spans residues 159 to 172; sequence KWTKYFHKICCPCC. Residues 255–258 and 269–270 contribute to the ATP site; these read QLFV and RK. Residues 262 to 270 form an important for interaction with membranes region; that stretch reads KEADYWLRK. A catalytic loop region spans residues 299–307; it reads RNTDRGNDN. Positions 340–360 are activation loop; it reads AIDNGLAFPFKHPDEWRAYPF. ATP is bound at residue D342. Positions 355-364 are important for interaction with membranes; that stretch reads WRAYPFHWAW.

The protein belongs to the PI3/PI4-kinase family. Type II PI4K subfamily.

The protein resides in the cytoplasm. The protein localises to the cytosol. It is found in the golgi apparatus membrane. It localises to the endoplasmic reticulum membrane. Its subcellular location is the cell membrane. The protein resides in the early endosome membrane. It carries out the reaction a 1,2-diacyl-sn-glycero-3-phospho-(1D-myo-inositol) + ATP = a 1,2-diacyl-sn-glycero-3-phospho-(1D-myo-inositol 4-phosphate) + ADP + H(+). Contributes to the overall PI4-kinase activity of the cell. This contribution may be especially significant in plasma membrane, endosomal and Golgi compartments. The phosphorylation of phosphatidylinositol (PI) to PI4P is the first committed step in the generation of phosphatidylinositol 4,5-bisphosphate (PIP2), a precursor of the second messenger inositol 1,4,5-trisphosphate (InsP3). The polypeptide is Phosphatidylinositol 4-kinase type 2-beta (PI4K2B) (Gallus gallus (Chicken)).